A 609-amino-acid chain; its full sequence is Glutamine--fructose-6-phosphate aminotransferase [isomerizing] (609 aa).

C2 acts as the Nucleophile; for GATase activity in catalysis. The 217-residue stretch at 2–218 (CGIVGAIAQR…EGDIAEITRR (217 aa)) folds into the Glutamine amidotransferase type-2 domain. 2 consecutive SIS domains span residues 286 to 426 (ADEL…LKGL) and 458 to 599 (LAED…VDQP). K604 functions as the For Fru-6P isomerization activity in the catalytic mechanism.

In terms of assembly, homodimer. In pull-down experiments interacts with CedA.

It localises to the cytoplasm. The catalysed reaction is D-fructose 6-phosphate + L-glutamine = D-glucosamine 6-phosphate + L-glutamate. Its function is as follows. Catalyzes the first step in hexosamine metabolism, converting fructose-6P into glucosamine-6P using glutamine as a nitrogen source. This chain is Glutamine--fructose-6-phosphate aminotransferase [isomerizing] (glmS), found in Escherichia coli (strain K12).